The sequence spans 427 residues: MSIVFSVVRSRIPSHYGHYNHSHHPHFEDLVVKPLTNILPLLTGFTLLAGVILLIHISIPQAEPYTSKFLFLSHRQPSTGLYSVGDGDVCFVLFEVLTLAGLREGCMKYLLAPFARVMGVSKERKVVRFSEQGWILMYYSVFWPLGMLIWAKSPHFSDMDQLWIHWPQRDIDGLIKFYILTQLAYWIQQVISVNIEARRKDYWLNVVHHFITITLILLCYVYHHTRVGSLILVMMDAIEILFPFAKCLRYLGFTTLCDLVFFLFFVTWIVSRHVLYLMTCWSVYSDVPRIIEPSCFMGSANDLHGPLPVPDDWWHLIEPWIYPKGKVCHSDSFRVSILAYLLLLQVLMMIWFGFICKVAIGVLDGRAAEDVRSDVESDEEDSEPVANGSGWQQSQLQPGRRVGSNGAAQMVDGVKKDLRCNIHCNEE.

The N-linked (GlcNAc...) asparagine glycan is linked to asparagine 20. A run of 6 helical transmembrane segments spans residues 38–58, 131–151, 173–193, 202–222, 250–270, and 335–355; these read ILPLLTGFTLLAGVILLIHIS, EQGWILMYYSVFWPLGMLIWA, GLIKFYILTQLAYWIQQVISV, YWLNVVHHFITITLILLCYVY, YLGFTTLCDLVFFLFFVTWIV, and VSILAYLLLLQVLMMIWFGFI. Residues 124–364 enclose the TLC domain; that stretch reads RKVVRFSEQG…ICKVAIGVLD (241 aa). Positions 373-406 are disordered; the sequence is SDVESDEEDSEPVANGSGWQQSQLQPGRRVGSNG. Asparagine 387 is a glycosylation site (N-linked (GlcNAc...) asparagine).

Belongs to the sphingosine N-acyltransferase family.

The protein resides in the endoplasmic reticulum membrane. The protein operates within mycotoxin biosynthesis. Functionally, ceramide synthase; part of the gene cluster that mediates the biosynthesis of fumonisins B1 (FB1), B2 (FB2), B3 (FB3), and B4 (FB4), which are carcinogenic mycotoxins. Plays a role in self-protection from FB1 toxicity by contributing to ceramide synthesis. The biosynthesis starts with the FUM1-catalyzed carbon chain assembly from one molecule of acetyl-CoA, eight molecules of malonyl-CoA, and two molecules of methionine (in S-adenosyl form). The C18 polyketide chain is released from the enzyme by a nucleophilic attack of a carbanion, which is derived from R-carbon of alanine by decarboxylation, on the carbonyl carbon of polyketide acyl chain. This step is catalyzed by the pyridoxal 5'-phosphate-dependent aminoacyl transferase FUM8. The resultant 3-keto intermediate is then stereospecifically reduced to a 3-hydroxyl product by reductase FUM13. Subsequent oxidations at C-10 by the cytochrome P450 monooxygenase FUM2, C-14 and C-15 by FUM6, FUM12 or FUM15, tricarballylic esterification of the hydroxyl groups on C-14 and C-15 by acyltransferase FUM14, and C-5 hydroxylation by 2-keto-glutarate-dependent dioxygenase FUM3 furnish the biosynthesis of fumonisins. The tricarballylic moieties are most likely derived from the citric acid cycle, and their addition to the carbon backbone may involve FUM7, FUM10, FUM11 and FUM14. The chain is Ceramide Synthase FUM18 from Gibberella moniliformis (strain M3125 / FGSC 7600) (Maize ear and stalk rot fungus).